Consider the following 129-residue polypeptide: Protachykinin-1 (129 aa).

The first 19 residues, 1 to 19 (MKILVALAVFFLVSTQLFA), serve as a signal peptide directing secretion. A propeptide spanning residues 20-56 (EEIGANDDLNYWSDWYDSDQIKEELPEPFEHLLQRIA) is cleaved from the precursor. Met68 and Met107 each carry methionine amide.

It belongs to the tachykinin family. Post-translationally, the substance P form is cleaved at Pro-59 by the prolyl endopeptidase FAP (seprase) activity (in vitro). Substance P is also cleaved and degraded by Angiotensin-converting enzyme (ACE) and neprilysin (MME).

It localises to the secreted. Functionally, tachykinins are active peptides which excite neurons, evoke behavioral responses, are potent vasodilators and secretagogues, and contract (directly or indirectly) many smooth muscles. In Homo sapiens (Human), this protein is Protachykinin-1 (TAC1).